The chain runs to 218 residues: Peptide methionine sulfoxide reductase MsrA (218 aa).

The active site involves Cys-57.

Belongs to the MsrA Met sulfoxide reductase family.

The enzyme catalyses L-methionyl-[protein] + [thioredoxin]-disulfide + H2O = L-methionyl-(S)-S-oxide-[protein] + [thioredoxin]-dithiol. The catalysed reaction is [thioredoxin]-disulfide + L-methionine + H2O = L-methionine (S)-S-oxide + [thioredoxin]-dithiol. Has an important function as a repair enzyme for proteins that have been inactivated by oxidation. Catalyzes the reversible oxidation-reduction of methionine sulfoxide in proteins to methionine. The protein is Peptide methionine sulfoxide reductase MsrA of Brucella anthropi (Ochrobactrum anthropi).